Here is a 397-residue protein sequence, read N- to C-terminus: Zinc finger CCCH domain-containing protein 33 (397 aa).

5 consecutive C3H1-type zinc fingers follow at residues 40–68, 85–113, 131–159, 274–302, and 320–348; these read RPGE…HPRD, RIGQ…HPRN, RSNE…HPQP, RPGQ…HPRD, and RPGE…HPMR. The segment at 361-397 is disordered; sequence EVVETSTGKSRRLSVSETRQAATTSSGKDTTIDNTQQ. The segment covering 364–397 has biased composition (polar residues); it reads ETSTGKSRRLSVSETRQAATTSSGKDTTIDNTQQ.

The protein localises to the nucleus. In Arabidopsis thaliana (Mouse-ear cress), this protein is Zinc finger CCCH domain-containing protein 33 (ZFN1).